The chain runs to 436 residues: Na(+)/H(+) antiporter NhaA 2 (436 aa).

11 consecutive transmembrane segments (helical) span residues 35–55, 80–100, 116–136, 147–167, 176–196, 201–221, 226–246, 283–303, 313–333, 354–374, and 385–405; these read FGGG…NSPW, LATW…GLEL, ALPV…YVGI, GWAI…AVIG, AFLL…IAIF, FKLT…LLVQ, WWWA…ESGV, VSAG…SLRG, PIVV…IFGS, LLGV…IGEL, and VKAA…AVLS.

The protein belongs to the NhaA Na(+)/H(+) (TC 2.A.33) antiporter family.

Its subcellular location is the cell membrane. It carries out the reaction Na(+)(in) + 2 H(+)(out) = Na(+)(out) + 2 H(+)(in). Functionally, na(+)/H(+) antiporter that extrudes sodium in exchange for external protons. The protein is Na(+)/H(+) antiporter NhaA 2 of Salinispora arenicola (strain CNS-205).